The chain runs to 93 residues: Small ribosomal subunit protein uS15 (93 aa).

The protein belongs to the universal ribosomal protein uS15 family. In terms of assembly, part of the 30S ribosomal subunit. Forms a bridge to the 50S subunit in the 70S ribosome, contacting the 23S rRNA.

One of the primary rRNA binding proteins, it binds directly to 16S rRNA where it helps nucleate assembly of the platform of the 30S subunit by binding and bridging several RNA helices of the 16S rRNA. Its function is as follows. Forms an intersubunit bridge (bridge B4) with the 23S rRNA of the 50S subunit in the ribosome. The sequence is that of Small ribosomal subunit protein uS15 from Anaplasma marginale (strain St. Maries).